We begin with the raw amino-acid sequence, 173 residues long: Putative 2-oxo-4-hydroxy-4-carboxy-5-ureidoimidazoline decarboxylase (173 aa).

Residue His-67 is the Proton donor of the active site. Substrate is bound by residues Pro-68, 84 to 88 (SQREQ), and 119 to 123 (FVLAA). The Microbody targeting signal signature appears at 171–173 (AKL).

This sequence belongs to the OHCU decarboxylase family. In terms of tissue distribution, apparently not expressed.

The protein localises to the peroxisome. It carries out the reaction 5-hydroxy-2-oxo-4-ureido-2,5-dihydro-1H-imidazole-5-carboxylate + H(+) = (S)-allantoin + CO2. It functions in the pathway purine metabolism; urate degradation; (S)-allantoin from urate: step 3/3. In terms of biological role, catalyzes the stereoselective decarboxylation of 2-oxo-4-hydroxy-4-carboxy-5-ureidoimidazoline (OHCU) to (S)-allantoin. The sequence is that of Putative 2-oxo-4-hydroxy-4-carboxy-5-ureidoimidazoline decarboxylase (URAD) from Homo sapiens (Human).